The chain runs to 319 residues: Thioredoxin reductase (319 aa).

37–44 (ERGVPGGQ) contacts FAD. An intrachain disulfide couples cysteine 136 to cysteine 139. FAD is bound at residue 279–288 (DVRAKSLRQI).

This sequence belongs to the class-II pyridine nucleotide-disulfide oxidoreductase family. As to quaternary structure, homodimer. Requires FAD as cofactor.

It localises to the cytoplasm. The enzyme catalyses [thioredoxin]-dithiol + NADP(+) = [thioredoxin]-disulfide + NADPH + H(+). The chain is Thioredoxin reductase (trxB) from Listeria innocua serovar 6a (strain ATCC BAA-680 / CLIP 11262).